Consider the following 853-residue polypeptide: Replication protein A 70 kDa DNA-binding subunit C (853 aa).

Residues 118-282 (PKEPGHSSIN…QSAYQPQQPP (165 aa)) form a disordered region. 6 stretches are compositionally biased toward polar residues: residues 124–144 (SSINPQRGGVNTQSNGGSEQQ), 159–173 (SANSPQPQVVHNSSD), 180–194 (SANSPQPQVVHSSSD), 201–211 (SANSPQRQVVH), 222–249 (PQVSQRYGTGSGYPETSPSTRPYVSSNA), and 263–278 (TATTAYSRPVQSAYQP). A DNA-binding region (OB) is located at residues 312–399 (WTIKVRVTSK…NDYEIHLDSA (88 aa)). Residues 602–628 (CPIMNGDRPCSKKVTNNGDGTWRCEKC) form a C4-type zinc finger.

This sequence belongs to the replication factor A protein 1 family. As to quaternary structure, heterotrimer of RPA1, RPA2 and RPA3 (canonical replication protein A complex).

It localises to the nucleus. Component of the replication protein A complex (RPA) required for DNA recombination, repair and replication. The activity of RPA is mediated by single-stranded DNA binding and protein interactions. Probably involved in repair of double-strand DNA breaks (DSBs) induced by genotoxic stresses. This is Replication protein A 70 kDa DNA-binding subunit C (RPA1C) from Arabidopsis thaliana (Mouse-ear cress).